Reading from the N-terminus, the 456-residue chain is 3-isopropylmalate dehydratase large subunit (456 aa).

The [4Fe-4S] cluster site is built by Cys336, Cys396, and Cys399.

The protein belongs to the aconitase/IPM isomerase family. LeuC type 1 subfamily. In terms of assembly, heterodimer of LeuC and LeuD. It depends on [4Fe-4S] cluster as a cofactor.

The enzyme catalyses (2R,3S)-3-isopropylmalate = (2S)-2-isopropylmalate. Its pathway is amino-acid biosynthesis; L-leucine biosynthesis; L-leucine from 3-methyl-2-oxobutanoate: step 2/4. In terms of biological role, catalyzes the isomerization between 2-isopropylmalate and 3-isopropylmalate, via the formation of 2-isopropylmaleate. This chain is 3-isopropylmalate dehydratase large subunit, found in Staphylococcus saprophyticus subsp. saprophyticus (strain ATCC 15305 / DSM 20229 / NCIMB 8711 / NCTC 7292 / S-41).